A 500-amino-acid chain; its full sequence is Probable malate:quinone oxidoreductase (500 aa).

Belongs to the MQO family. The cofactor is FAD.

The enzyme catalyses (S)-malate + a quinone = a quinol + oxaloacetate. It participates in carbohydrate metabolism; tricarboxylic acid cycle; oxaloacetate from (S)-malate (quinone route): step 1/1. In Bacillus cereus (strain B4264), this protein is Probable malate:quinone oxidoreductase.